The following is a 330-amino-acid chain: Ketol-acid reductoisomerase (NADP(+)) (330 aa).

In terms of domain architecture, KARI N-terminal Rossmann spans 1 to 181 (MKVYYEQDAT…GGARSGVIET (181 aa)). NADP(+) contacts are provided by residues 24–27 (YGSQ), arginine 47, and 82–85 (DQVQ). The active site involves histidine 107. Glycine 133 provides a ligand contact to NADP(+). A KARI C-terminal knotted domain is found at 182–327 (TFKEETETDL…GKLRGMMPWL (146 aa)). Positions 190, 194, 226, and 230 each coordinate Mg(2+). Serine 251 contributes to the substrate binding site.

The protein belongs to the ketol-acid reductoisomerase family. The cofactor is Mg(2+).

It catalyses the reaction (2R)-2,3-dihydroxy-3-methylbutanoate + NADP(+) = (2S)-2-acetolactate + NADPH + H(+). The catalysed reaction is (2R,3R)-2,3-dihydroxy-3-methylpentanoate + NADP(+) = (S)-2-ethyl-2-hydroxy-3-oxobutanoate + NADPH + H(+). It functions in the pathway amino-acid biosynthesis; L-isoleucine biosynthesis; L-isoleucine from 2-oxobutanoate: step 2/4. It participates in amino-acid biosynthesis; L-valine biosynthesis; L-valine from pyruvate: step 2/4. Functionally, involved in the biosynthesis of branched-chain amino acids (BCAA). Catalyzes an alkyl-migration followed by a ketol-acid reduction of (S)-2-acetolactate (S2AL) to yield (R)-2,3-dihydroxy-isovalerate. In the isomerase reaction, S2AL is rearranged via a Mg-dependent methyl migration to produce 3-hydroxy-3-methyl-2-ketobutyrate (HMKB). In the reductase reaction, this 2-ketoacid undergoes a metal-dependent reduction by NADPH to yield (R)-2,3-dihydroxy-isovalerate. This Nitratidesulfovibrio vulgaris (strain DSM 19637 / Miyazaki F) (Desulfovibrio vulgaris) protein is Ketol-acid reductoisomerase (NADP(+)).